The primary structure comprises 216 residues: ATP phosphoribosyltransferase (216 aa).

Belongs to the ATP phosphoribosyltransferase family. Short subfamily. Heteromultimer composed of HisG and HisZ subunits.

It is found in the cytoplasm. It catalyses the reaction 1-(5-phospho-beta-D-ribosyl)-ATP + diphosphate = 5-phospho-alpha-D-ribose 1-diphosphate + ATP. It functions in the pathway amino-acid biosynthesis; L-histidine biosynthesis; L-histidine from 5-phospho-alpha-D-ribose 1-diphosphate: step 1/9. Its function is as follows. Catalyzes the condensation of ATP and 5-phosphoribose 1-diphosphate to form N'-(5'-phosphoribosyl)-ATP (PR-ATP). Has a crucial role in the pathway because the rate of histidine biosynthesis seems to be controlled primarily by regulation of HisG enzymatic activity. The chain is ATP phosphoribosyltransferase from Rubrobacter xylanophilus (strain DSM 9941 / JCM 11954 / NBRC 16129 / PRD-1).